A 370-amino-acid polypeptide reads, in one-letter code: Holliday junction branch migration complex subunit RuvB (370 aa).

The disordered stretch occupies residues 1-53 (MAILSSQKQPLEPEPSKNPQSVQQPGLPPSTPEQGLLTAEVSPEERLSRTDDI). Positions 13 to 214 (PEPSKNPQSV…FGLIQRLRFY (202 aa)) are large ATPase domain (RuvB-L). The span at 43–53 (PEERLSRTDDI) shows a compositional bias: basic and acidic residues. ATP-binding positions include isoleucine 53, arginine 54, glycine 95, lysine 98, threonine 99, threonine 100, 161–163 (EDF), arginine 204, tyrosine 214, and arginine 251. Residue threonine 99 participates in Mg(2+) binding. The small ATPAse domain (RuvB-S) stretch occupies residues 215 to 285 (EPEELSQIIL…IASEALQLFN (71 aa)). The segment at 288–370 (PCGLDWTDRR…TPPDGQLSLL (83 aa)) is head domain (RuvB-H). DNA is bound by residues arginine 343 and arginine 348.

It belongs to the RuvB family. In terms of assembly, homohexamer. Forms an RuvA(8)-RuvB(12)-Holliday junction (HJ) complex. HJ DNA is sandwiched between 2 RuvA tetramers; dsDNA enters through RuvA and exits via RuvB. An RuvB hexamer assembles on each DNA strand where it exits the tetramer. Each RuvB hexamer is contacted by two RuvA subunits (via domain III) on 2 adjacent RuvB subunits; this complex drives branch migration. In the full resolvosome a probable DNA-RuvA(4)-RuvB(12)-RuvC(2) complex forms which resolves the HJ.

The protein localises to the cytoplasm. It catalyses the reaction ATP + H2O = ADP + phosphate + H(+). The RuvA-RuvB-RuvC complex processes Holliday junction (HJ) DNA during genetic recombination and DNA repair, while the RuvA-RuvB complex plays an important role in the rescue of blocked DNA replication forks via replication fork reversal (RFR). RuvA specifically binds to HJ cruciform DNA, conferring on it an open structure. The RuvB hexamer acts as an ATP-dependent pump, pulling dsDNA into and through the RuvAB complex. RuvB forms 2 homohexamers on either side of HJ DNA bound by 1 or 2 RuvA tetramers; 4 subunits per hexamer contact DNA at a time. Coordinated motions by a converter formed by DNA-disengaged RuvB subunits stimulates ATP hydrolysis and nucleotide exchange. Immobilization of the converter enables RuvB to convert the ATP-contained energy into a lever motion, pulling 2 nucleotides of DNA out of the RuvA tetramer per ATP hydrolyzed, thus driving DNA branch migration. The RuvB motors rotate together with the DNA substrate, which together with the progressing nucleotide cycle form the mechanistic basis for DNA recombination by continuous HJ branch migration. Branch migration allows RuvC to scan DNA until it finds its consensus sequence, where it cleaves and resolves cruciform DNA. The chain is Holliday junction branch migration complex subunit RuvB from Cyanothece sp. (strain PCC 7425 / ATCC 29141).